The sequence spans 335 residues: Auxin-responsive protein IAA6 (335 aa).

An EAR-like (transcriptional repression) motif is present at residues 51 to 55; sequence LKLGL. 3 disordered regions span residues 81–102, 143–180, and 188–207; these read LSFF…GAKR, KKGC…VGWP, and NLAS…DNAN. The PB1 domain maps to 217–321; sequence NPLVKINMDG…TAKRLRVLRS (105 aa).

Belongs to the Aux/IAA family. In terms of assembly, homodimers and heterodimers. Highly expressed in roots. Expressed in shoots and flowers.

The protein localises to the nucleus. In terms of biological role, aux/IAA proteins are short-lived transcriptional factors that function as repressors of early auxin response genes at low auxin concentrations. This is Auxin-responsive protein IAA6 (IAA6) from Oryza sativa subsp. japonica (Rice).